Consider the following 185-residue polypeptide: Ribosome-recycling factor (185 aa).

This sequence belongs to the RRF family.

It is found in the cytoplasm. Functionally, responsible for the release of ribosomes from messenger RNA at the termination of protein biosynthesis. May increase the efficiency of translation by recycling ribosomes from one round of translation to another. This chain is Ribosome-recycling factor, found in Alkaliphilus oremlandii (strain OhILAs) (Clostridium oremlandii (strain OhILAs)).